Consider the following 288-residue polypeptide: 4-diphosphocytidyl-2-C-methyl-D-erythritol kinase (288 aa).

The active site involves lysine 13. 96–106 lines the ATP pocket; sequence PMGGGIGGGSS. Aspartate 138 is a catalytic residue.

The protein belongs to the GHMP kinase family. IspE subfamily.

The catalysed reaction is 4-CDP-2-C-methyl-D-erythritol + ATP = 4-CDP-2-C-methyl-D-erythritol 2-phosphate + ADP + H(+). The protein operates within isoprenoid biosynthesis; isopentenyl diphosphate biosynthesis via DXP pathway; isopentenyl diphosphate from 1-deoxy-D-xylulose 5-phosphate: step 3/6. In terms of biological role, catalyzes the phosphorylation of the position 2 hydroxy group of 4-diphosphocytidyl-2C-methyl-D-erythritol. The sequence is that of 4-diphosphocytidyl-2-C-methyl-D-erythritol kinase from Aliivibrio fischeri (strain MJ11) (Vibrio fischeri).